A 24-amino-acid polypeptide reads, in one-letter code: Small ribosomal subunit protein uS19c (24 aa).

The protein belongs to the universal ribosomal protein uS19 family.

The protein resides in the plastid. It is found in the chloroplast. In terms of biological role, protein S19 forms a complex with S13 that binds strongly to the 16S ribosomal RNA. The sequence is that of Small ribosomal subunit protein uS19c (rps19) from Petunia hybrida (Petunia).